A 687-amino-acid polypeptide reads, in one-letter code: Cytochrome b/c1 (687 aa).

The chain crosses the membrane as a helical span at residues 46-66; it reads FGAILSFMLGMQILTGVILAM. Residues H96 and H110 each contribute to the heme b site. 2 helical membrane passes run 126-146 and 160-180; these read VLWI…FMGY and VITN…TLLW. Heme b-binding residues include H197 and H211. 6 helical membrane passes run 199–219, 247–267, 305–325, 337–357, 363–383, and 410–430; these read LLPF…HVAG, FGVA…PNYL, LAGV…PWLD, LAKQ…YLGA, IYVI…LIVL, and AVAS…GSLQ. Residues 404-434 are internal signal sequence; the sequence is LAKGGKAVASVAIALVAAGALFLGSLQDARA. Residues 458-643 enclose the Cytochrome c domain; the sequence is GALQRGLKVY…TVAQYSKDVT (186 aa). The heme c site is built by C471, C474, H475, and M616. The helical transmembrane segment at 666-678 threads the bilayer; sequence VFLIIFAGLMYFT.

Belongs to the cytochrome b family. As to quaternary structure, the main subunits of complex b-c1 are: cytochrome b, cytochrome c1 and the Rieske protein. Heme b serves as cofactor. Requires heme c as cofactor. Post-translationally, the protein is post-translationally processed into cytochrome b and c1. This occurs by processing between residues 434 and 435 without processing between cytochrome b and the N-terminal of the putative signal sequence domain.

It is found in the cell inner membrane. In terms of biological role, component of the ubiquinol-cytochrome c reductase complex (complex III or cytochrome b-c1 complex), which is a respiratory chain that generates an electrochemical potential coupled to ATP synthesis. c1 functions as an electron donor to cytochrome c. The polypeptide is Cytochrome b/c1 (fbcH) (Bradyrhizobium diazoefficiens (strain JCM 10833 / BCRC 13528 / IAM 13628 / NBRC 14792 / USDA 110)).